A 278-amino-acid polypeptide reads, in one-letter code: Elongation factor Ts (278 aa).

The involved in Mg(2+) ion dislocation from EF-Tu stretch occupies residues 80-83; that stretch reads TDFV.

Belongs to the EF-Ts family.

It localises to the cytoplasm. In terms of biological role, associates with the EF-Tu.GDP complex and induces the exchange of GDP to GTP. It remains bound to the aminoacyl-tRNA.EF-Tu.GTP complex up to the GTP hydrolysis stage on the ribosome. This chain is Elongation factor Ts, found in Pseudarthrobacter chlorophenolicus (strain ATCC 700700 / DSM 12829 / CIP 107037 / JCM 12360 / KCTC 9906 / NCIMB 13794 / A6) (Arthrobacter chlorophenolicus).